Consider the following 211-residue polypeptide: Middle transcription regulatory protein motA (211 aa).

Residues 23 to 42 (LITIAKKDFITAAEVREVHP) constitute a DNA-binding region (H-T-H motif).

In terms of biological role, required for the transcriptional activation of middle promoters. Middle promoters are characterized by the presence of the conserved sequence [AT]3TGCTTNA (MotA box). MotA binds directly to MotA boxes. This Enterobacteria phage T4 (Bacteriophage T4) protein is Middle transcription regulatory protein motA (motA).